The chain runs to 123 residues: Small ribosomal subunit protein uS12 (123 aa).

D89 is modified (3-methylthioaspartic acid).

This sequence belongs to the universal ribosomal protein uS12 family. Part of the 30S ribosomal subunit. Contacts proteins S8 and S17. May interact with IF1 in the 30S initiation complex.

Its function is as follows. With S4 and S5 plays an important role in translational accuracy. In terms of biological role, interacts with and stabilizes bases of the 16S rRNA that are involved in tRNA selection in the A site and with the mRNA backbone. Located at the interface of the 30S and 50S subunits, it traverses the body of the 30S subunit contacting proteins on the other side and probably holding the rRNA structure together. The combined cluster of proteins S8, S12 and S17 appears to hold together the shoulder and platform of the 30S subunit. The sequence is that of Small ribosomal subunit protein uS12 from Beijerinckia indica subsp. indica (strain ATCC 9039 / DSM 1715 / NCIMB 8712).